Here is a 142-residue protein sequence, read N- to C-terminus: Large ribosomal subunit protein uL11 (142 aa).

This sequence belongs to the universal ribosomal protein uL11 family. As to quaternary structure, part of the ribosomal stalk of the 50S ribosomal subunit. Interacts with L10 and the large rRNA to form the base of the stalk. L10 forms an elongated spine to which L12 dimers bind in a sequential fashion forming a multimeric L10(L12)X complex. In terms of processing, one or more lysine residues are methylated.

In terms of biological role, forms part of the ribosomal stalk which helps the ribosome interact with GTP-bound translation factors. The chain is Large ribosomal subunit protein uL11 from Shigella boydii serotype 4 (strain Sb227).